The sequence spans 1848 residues: Unconventional myosin-Vb (1848 aa).

Met1 is modified (N-acetylmethionine). The Myosin N-terminal SH3-like domain maps to 8-60 (SQCTRVWIPDPDEVWRSAELTKDYKEGDKSLQLRLEDETILEYPIDVQRNQLP). A requires for interaction with LIMA1 region spans residues 21–40 (VWRSAELTKDYKEGDKSLQL). The Myosin motor domain maps to 69 to 761 (VGENDLTALS…QVAYLEKLRA (693 aa)). 163–170 (GESGAGKT) contributes to the ATP binding site. The disordered stretch occupies residues 596 to 630 (KDPVPATTPGKGSSSKISVRSARPPMKVSNKEHKK). An actin-binding region spans residues 640–662 (LHLLMETLNATTPHYVRCIKPND). 6 IQ domains span residues 769–798 (IMIQ…QRYC), 792–821 (LTLQ…VLQK), 817–848 (VVLQ…FTRA), 840–869 (VVIQ…TIQK), 865–896 (TTIQ…AFRM), and 888–917 (IVIQ…EHLK). Coiled coils occupy residues 899 to 1266 (ARRE…ILRT) and 1341 to 1471 (RLLE…GMLE). 2 disordered regions span residues 1093–1123 (QTPG…EIGD) and 1166–1192 (QLEK…LDPN). Residues 1101–1121 (PSNQSSLESDSNYPSISTSEI) show a composition bias toward polar residues. Residues 1166 to 1179 (QLEKREQQDSKKVQ) show a composition bias toward basic and acidic residues. At Ser1446 the chain carries Phosphoserine. One can recognise a Dilute domain in the interval 1526–1803 (TSTINGIKKV…IRTIQAQLQE (278 aa)).

This sequence belongs to the TRAFAC class myosin-kinesin ATPase superfamily. Myosin family. In terms of assembly, component of the CART complex, at least composed of ACTN4, HGS/HRS, MYO5B and TRIM3. Interacts with RAB11FIP2, RAB11A, and RAB8A. Found in a complex with CFTR and RAB11A. Interacts with NPC1L1;. Interacts with LIMA1.

The protein resides in the cytoplasm. In terms of biological role, may be involved in vesicular trafficking via its association with the CART complex. The CART complex is necessary for efficient transferrin receptor recycling but not for EGFR degradation. Required in a complex with RAB11A and RAB11FIP2 for the transport of NPC1L1 to the plasma membrane. Together with RAB11A participates in CFTR trafficking to the plasma membrane and TF (transferrin) recycling in nonpolarized cells. Together with RAB11A and RAB8A participates in epithelial cell polarization. Together with RAB25 regulates transcytosis. Required for proper localization of bile salt export pump ABCB11 at the apical/canalicular plasma membrane of hepatocytes. This chain is Unconventional myosin-Vb (MYO5B), found in Homo sapiens (Human).